Here is a 353-residue protein sequence, read N- to C-terminus: Abasic site processing protein HMCES (353 aa).

Residue Cys-2 is the Nucleophile of the active site. Cys-2 carries the thiazolidine linkage to a ring-opened DNA abasic site modification. Glu-127 is a catalytic residue. Residues Lys-148 and Lys-151 each participate in a glycyl lysine isopeptide (Lys-Gly) (interchain with G-Cter in SUMO2) cross-link. Ser-160 bears the Phosphoserine mark. Glycyl lysine isopeptide (Lys-Gly) (interchain with G-Cter in SUMO2) cross-links involve residues Lys-274 and Lys-275. The disordered stretch occupies residues 292-353; the sequence is TKSPKKEVPD…DEPVAKRPNS (62 aa). Phosphoserine is present on Ser-294. The span at 295 to 307 shows a compositional bias: basic and acidic residues; that stretch reads PKKEVPDSPKKDA. Lys-305 is covalently cross-linked (Glycyl lysine isopeptide (Lys-Gly) (interchain with G-Cter in SUMO2)). Ser-321 carries the phosphoserine modification. The PIP-box motif lies at 332–338; the sequence is SLLDRWL. Positions 336-353 are enriched in basic and acidic residues; it reads RWLKQEKEDEPVAKRPNS. Glycyl lysine isopeptide (Lys-Gly) (interchain with G-Cter in SUMO2) cross-links involve residues Lys-339 and Lys-342.

Belongs to the SOS response-associated peptidase family. In terms of assembly, interacts (via PIP-box motif) with PCNA. Ubiquitinated; the covalent HMCES DNA-protein cross-link is ubiquitinated, leading to its degradation by the proteasome.

It localises to the chromosome. Its activity is regulated as follows. Formation and reversal of DNA-protein cross-link depends on DNA context. Catalyzes formation of the thiazolidine linkage in presence of abasic sites in single-stranded DNA. Mediates the reversal of the thiazolidine cross-link in presence of double stranded DNA. Functionally, sensor of abasic sites in single-stranded DNA (ssDNA) required to preserve genome integrity by promoting error-free repair of abasic sites. Acts as an enzyme that recognizes and binds abasic sites in ssDNA at replication forks and chemically modifies the lesion by forming a covalent cross-link with DNA: forms a stable thiazolidine linkage between a ring-opened abasic site and the alpha-amino and sulfhydryl substituents of its N-terminal catalytic cysteine residue. Promotes error-free repair by protecting abasic sites from translesion synthesis (TLS) polymerases and endonucleases that are error-prone and would generate mutations and double-strand breaks. The HMCES DNA-protein cross-link is then either reversed or degraded. HMCES is able to catalyze the reversal of its thiazolidine cross-link and cycle between a cross-link and a non-cross-linked state depending on DNA context: mediates self-reversal of the thiazolidine cross-link in double stranded DNA, allowing APEX1 to initiate downstream repair of abasic sites. The HMCES DNA-protein cross-link can also be degraded by the SPRTN metalloprotease following unfolding by the BRIP1/FANCJ helicase. Has preference for ssDNA, but can also accommodate double-stranded DNA with 3' or 5' overhang (dsDNA), and dsDNA-ssDNA 3' junction. Plays a protective role during somatic hypermutation of immunoglobulin genes in B-cells: acts via its ability to form covalent cross-links with abasic sites, thereby limiting the accumulation of deletions in somatic hypermutation target regions. Also involved in class switch recombination (CSR) in B-cells independently of the formation of a DNA-protein cross-link: acts by binding and protecting ssDNA overhangs to promote DNA double-strand break repair through the microhomology-mediated alternative-end-joining (Alt-EJ) pathway. Acts as a protease: mediates autocatalytic processing of its N-terminal methionine in order to expose the catalytic cysteine. This Rattus norvegicus (Rat) protein is Abasic site processing protein HMCES.